Here is a 228-residue protein sequence, read N- to C-terminus: Octanoyltransferase (228 aa).

Residues 40–225 (GEEAERVWLV…SFERVFDAAP (186 aa)) enclose the BPL/LPL catalytic domain. Substrate-binding positions include 79–86 (RGGQWTYH), 156–158 (AIG), and 169–171 (GIA). The active-site Acyl-thioester intermediate is the C187.

Belongs to the LipB family.

It is found in the cytoplasm. The catalysed reaction is octanoyl-[ACP] + L-lysyl-[protein] = N(6)-octanoyl-L-lysyl-[protein] + holo-[ACP] + H(+). It functions in the pathway protein modification; protein lipoylation via endogenous pathway; protein N(6)-(lipoyl)lysine from octanoyl-[acyl-carrier-protein]: step 1/2. In terms of biological role, catalyzes the transfer of endogenously produced octanoic acid from octanoyl-acyl-carrier-protein onto the lipoyl domains of lipoate-dependent enzymes. Lipoyl-ACP can also act as a substrate although octanoyl-ACP is likely to be the physiological substrate. The sequence is that of Octanoyltransferase from Acidiphilium cryptum (strain JF-5).